A 108-amino-acid chain; its full sequence is CHGFDSGYDITKKEGVESLLSEIENLFGLERLKMIHLNDSKYPLGAAKDRHERIGSGFIGEAGFAVFFSFKEVQRIPWILETPGGNEEHAEDIKKVFEIIEKYRIEVD.

Zn(2+) contacts are provided by His-2, His-36, Asp-49, His-51, and Glu-81.

Belongs to the AP endonuclease 2 family. Zn(2+) serves as cofactor.

It carries out the reaction Endonucleolytic cleavage to 5'-phosphooligonucleotide end-products.. Its function is as follows. Endonuclease IV plays a role in DNA repair. It cleaves phosphodiester bonds at apurinic or apyrimidinic (AP) sites, generating a 3'-hydroxyl group and a 5'-terminal sugar phosphate. The sequence is that of Probable endonuclease 4 (nfo) from Thermotoga neapolitana.